The primary structure comprises 315 residues: Ribosomal RNA small subunit methyltransferase H (315 aa).

S-adenosyl-L-methionine-binding positions include glycine 37–histidine 39, aspartate 57, phenylalanine 83, aspartate 105, and glutamine 112.

This sequence belongs to the methyltransferase superfamily. RsmH family.

It is found in the cytoplasm. The enzyme catalyses cytidine(1402) in 16S rRNA + S-adenosyl-L-methionine = N(4)-methylcytidine(1402) in 16S rRNA + S-adenosyl-L-homocysteine + H(+). In terms of biological role, specifically methylates the N4 position of cytidine in position 1402 (C1402) of 16S rRNA. In Pseudomonas putida (strain GB-1), this protein is Ribosomal RNA small subunit methyltransferase H.